The following is a 445-amino-acid chain: Enolase 1 (445 aa).

His164 and Glu173 together coordinate substrate. Residue Glu216 is the Proton donor of the active site. The Mg(2+) site is built by Asp251, Glu301, and Asp328. The substrate site is built by Glu301 and Asp328. The active-site Proton acceptor is the Lys353. Substrate-binding positions include 380–383 (SHRS) and Lys404.

The protein belongs to the enolase family. As to quaternary structure, homodimer. Requires Mg(2+) as cofactor.

It localises to the cytoplasm. It carries out the reaction (2R)-2-phosphoglycerate = phosphoenolpyruvate + H2O. The protein operates within carbohydrate degradation; glycolysis; pyruvate from D-glyceraldehyde 3-phosphate: step 4/5. This Hevea brasiliensis (Para rubber tree) protein is Enolase 1 (ENO1).